We begin with the raw amino-acid sequence, 275 residues long: NH(3)-dependent NAD(+) synthetase (275 aa).

46–53 lines the ATP pocket; the sequence is GISGGQDS. Aspartate 52 lines the Mg(2+) pocket. Arginine 140 contacts deamido-NAD(+). Residue threonine 160 coordinates ATP. Mg(2+) is bound at residue glutamate 165. Residues lysine 173 and aspartate 180 each contribute to the deamido-NAD(+) site. Lysine 189 and threonine 211 together coordinate ATP. 260-261 contributes to the deamido-NAD(+) binding site; the sequence is HK.

Belongs to the NAD synthetase family. In terms of assembly, homodimer.

It catalyses the reaction deamido-NAD(+) + NH4(+) + ATP = AMP + diphosphate + NAD(+) + H(+). It participates in cofactor biosynthesis; NAD(+) biosynthesis; NAD(+) from deamido-NAD(+) (ammonia route): step 1/1. In terms of biological role, catalyzes the ATP-dependent amidation of deamido-NAD to form NAD. Uses ammonia as a nitrogen source. The protein is NH(3)-dependent NAD(+) synthetase of Salmonella agona (strain SL483).